The primary structure comprises 88 residues: Small ribosomal subunit protein bS20 (88 aa).

The segment at 1–27 is disordered; the sequence is MANSKSAKKRALQSEKRRQHNASRRSM.

The protein belongs to the bacterial ribosomal protein bS20 family.

Binds directly to 16S ribosomal RNA. The protein is Small ribosomal subunit protein bS20 of Shewanella frigidimarina (strain NCIMB 400).